Consider the following 368-residue polypeptide: Glycolate oxidase 3 (368 aa).

M1 is modified (N-acetylmethionine). An FMN hydroxy acid dehydrogenase domain is found at 1-359 (MEITNVMEYE…SRTHIKTDWD (359 aa)). Position 24 (Y24) interacts with glyoxylate. Residues 77–79 (PTA), S106, 127–129 (QLY), and T155 each bind FMN. Y129 contacts glyoxylate. R164 lines the glyoxylate pocket. Residues K230 and S252 each coordinate FMN. H254 and R257 together coordinate glyoxylate. H254 acts as the Proton acceptor in catalysis. Residues 285–289 (DGGVR) and 308–309 (GR) each bind FMN.

It belongs to the FMN-dependent alpha-hydroxy acid dehydrogenase family. As to quaternary structure, homotetramer. FMN serves as cofactor.

The protein localises to the peroxisome. It carries out the reaction glycolate + O2 = glyoxylate + H2O2. The protein operates within photosynthesis; photorespiration; glycine from 2-phosphoglycolate: step 2/3. In terms of biological role, catalyzes the oxidation of glycolate to glyoxylate, with a reduction of O2 to H2O2. Is a key enzyme in photorespiration in green plants. This chain is Glycolate oxidase 3 (GLO5), found in Arabidopsis thaliana (Mouse-ear cress).